The primary structure comprises 440 residues: Ribosomal protein uS12 methylthiotransferase RimO (440 aa).

Positions 8-125 (LRCHAISLGC…WNEQILLALN (118 aa)) constitute an MTTase N-terminal domain. Residues Cys-17, Cys-52, Cys-87, Cys-152, Cys-156, and Cys-159 each contribute to the [4Fe-4S] cluster site. The 231-residue stretch at 138–368 (TTGKSYAWLK…MEIQLKISEK (231 aa)) folds into the Radical SAM core domain. The 69-residue stretch at 371–439 (KNFVGKRLSL…SYDLVALADS (69 aa)) folds into the TRAM domain.

Belongs to the methylthiotransferase family. RimO subfamily. [4Fe-4S] cluster is required as a cofactor.

It is found in the cytoplasm. It carries out the reaction L-aspartate(89)-[ribosomal protein uS12]-hydrogen + (sulfur carrier)-SH + AH2 + 2 S-adenosyl-L-methionine = 3-methylsulfanyl-L-aspartate(89)-[ribosomal protein uS12]-hydrogen + (sulfur carrier)-H + 5'-deoxyadenosine + L-methionine + A + S-adenosyl-L-homocysteine + 2 H(+). Functionally, catalyzes the methylthiolation of an aspartic acid residue of ribosomal protein uS12. This is Ribosomal protein uS12 methylthiotransferase RimO from Lawsonia intracellularis (strain PHE/MN1-00).